The chain runs to 398 residues: Stimulator of interferon genes protein (398 aa).

Residues 1–16 are Cytoplasmic-facing; that stretch reads MSVMGEDALVPRARSR. A helical membrane pass occupies residues 17 to 37; it reads LPVMCAAGLGFLTLAVAWLLD. Over 38–44 the chain is Lumenal; it reads SDKFSER. Residues 45–65 traverse the membrane as a helical segment; that stretch reads AGIIAFGLMLERFIYCICLLA. The Cytoplasmic segment spans residues 66-91; sequence EELLFHSRQRYHGRMSEIFRACFRGS. Residues 92–112 form a helical membrane-spanning segment; sequence GILGMCAIFLMLMLGGVSFSV. At 113 to 120 the chain is on the lumenal side; the sequence is KQWSHFNL. Residues 121–141 traverse the membrane as a helical segment; that stretch reads MCAGYMLLNSLGVLGPAPVEI. The Cytoplasmic segment spans residues 142–398; it reads SEICEAKKMN…FNPSSAMKQN (257 aa). The interval 150-331 is cyclic dinucleotide-binding domain (CBD); that stretch reads MNVAHGLAWS…QNLKQQDGEI (182 aa). Residues S159, Y164, R230, and T254 each coordinate 2',3'-cGAMP. 3',3'-c-di-GMP is bound by residues S159, Y164, 230–233, and T254; that span reads RSYT. The interval 375–398 is disordered; it reads PQSLRSEPVETTDYFNPSSAMKQN. The span at 387–398 shows a compositional bias: polar residues; sequence DYFNPSSAMKQN.

This sequence belongs to the STING family. Homodimer; forms a homodimer in absence of cyclic nucleotide (c-di-GMP or cGAMP). Homotetramer; in presence of cyclic nucleotide (c-di-GMP or cGAMP), forms tetramers and higher-order oligomers through side-by-side packing. Interacts (when phosphorylated) with irf3; following activation and phosphorylation by tbk1, recruits irf3. In terms of processing, phosphorylation by TBK1 leads to activation and production of IFN-beta. Following cyclic nucleotide (c-di-GMP or cGAMP)-binding, activation and translocation from the endoplasmic reticulum, STING1 is phosphorylated by tbk1, leading to recruitment of the transcription factor irf3 to induce type-I interferons and other cytokines.

It localises to the endoplasmic reticulum membrane. Its subcellular location is the cytoplasm. The protein resides in the perinuclear region. It is found in the endoplasmic reticulum-Golgi intermediate compartment membrane. The protein localises to the golgi apparatus membrane. It localises to the cytoplasmic vesicle. Its subcellular location is the autophagosome membrane. The enzyme catalyses H(+)(in) = H(+)(out). Its function is as follows. Facilitator of innate immune signaling that acts as a sensor of cytosolic DNA from bacteria and viruses and promotes the production of type I interferon (IFN-alpha and IFN-beta). Innate immune response is triggered in response to non-CpG double-stranded DNA from viruses and bacteria delivered to the cytoplasm. Acts by binding cyclic dinucleotides: recognizes and binds cyclic di-GMP (c-di-GMP), a second messenger produced by bacteria, and cyclic GMP-AMP (cGAMP), a messenger produced by CGAS in response to DNA virus in the cytosol. Upon binding of c-di-GMP or cGAMP, STING1 oligomerizes and is able to activate both NF-kappa-B and irf3 transcription pathways to induce expression of type I interferon and exert a potent anti-viral state. Exhibits 2',3' phosphodiester linkage-specific ligand recognition: can bind both 2'-3' linked cGAMP and 3'-3' linked cGAMP but is preferentially activated by 2'-3' linked cGAMP. In addition to promote the production of type I interferons, plays a direct role in autophagy. Following cGAMP-binding, STING1 buds from the endoplasmic reticulum into COPII vesicles, which then form the endoplasmic reticulum-Golgi intermediate compartment (ERGIC). The ERGIC serves as the membrane source for LC3 lipidation, leading to formation of autophagosomes that target cytosolic DNA or DNA viruses for degradation by the lysosome. Promotes autophagy by acting as a proton channel that directs proton efflux from the Golgi to facilitate LC3 lipidation. The autophagy- and interferon-inducing activities can be uncoupled and autophagy induction is independent of TBK1 phosphorylation. The polypeptide is Stimulator of interferon genes protein (Danio rerio (Zebrafish)).